Reading from the N-terminus, the 640-residue chain is 1-deoxy-D-xylulose-5-phosphate synthase (640 aa).

Residues His-72 and Gly-113–Ala-115 contribute to the thiamine diphosphate site. Asp-144 is a binding site for Mg(2+). Thiamine diphosphate-binding positions include Gly-145 to Ala-146, Asn-174, Tyr-287, and Glu-370. Asn-174 is a binding site for Mg(2+).

This sequence belongs to the transketolase family. DXPS subfamily. Homodimer. The cofactor is Mg(2+). It depends on thiamine diphosphate as a cofactor.

The catalysed reaction is D-glyceraldehyde 3-phosphate + pyruvate + H(+) = 1-deoxy-D-xylulose 5-phosphate + CO2. It functions in the pathway metabolic intermediate biosynthesis; 1-deoxy-D-xylulose 5-phosphate biosynthesis; 1-deoxy-D-xylulose 5-phosphate from D-glyceraldehyde 3-phosphate and pyruvate: step 1/1. In terms of biological role, catalyzes the acyloin condensation reaction between C atoms 2 and 3 of pyruvate and glyceraldehyde 3-phosphate to yield 1-deoxy-D-xylulose-5-phosphate (DXP). This is 1-deoxy-D-xylulose-5-phosphate synthase from Synechocystis sp. (strain ATCC 27184 / PCC 6803 / Kazusa).